A 787-amino-acid chain; its full sequence is Exocyst complex component SEC15B (787 aa).

The protein belongs to the SEC15 family. In terms of assembly, the exocyst complex is composed of SEC3, SEC5, SEC6, SEC8, SEC10, EXO70A1 and EXO84B. Interacts with EXO84B. Binds to EXO70H1 AND EXO70B2. Binds directly to B1L.

Its subcellular location is the cytoplasm. The protein resides in the cytosol. It localises to the cytoskeleton. The protein localises to the phragmoplast. It is found in the secreted. Its subcellular location is the cell wall. The protein resides in the extracellular exosome. In terms of biological role, component of the exocyst complex involved in the docking of exocytic vesicles with fusion sites on the plasma membrane during regulated or polarized secretion. Involved in polarized cell growth and organ morphogenesis. During cytokinesis, involved in cell plate initiation, cell plate maturation and formation of new primary cell wall. The sequence is that of Exocyst complex component SEC15B from Arabidopsis thaliana (Mouse-ear cress).